The sequence spans 102 residues: Small ribosomal subunit protein uS10 (102 aa).

Belongs to the universal ribosomal protein uS10 family. In terms of assembly, part of the 30S ribosomal subunit.

Functionally, involved in the binding of tRNA to the ribosomes. This chain is Small ribosomal subunit protein uS10, found in Methylobacterium radiotolerans (strain ATCC 27329 / DSM 1819 / JCM 2831 / NBRC 15690 / NCIMB 10815 / 0-1).